A 277-amino-acid polypeptide reads, in one-letter code: Tumor necrosis factor-inducible gene 6 protein (277 aa).

The first 17 residues, 1–17, serve as a signal peptide directing secretion; sequence MIILIYLFLLLWEDTQG. Positions 36–129 constitute a Link domain; it reads GVYHREARSG…SERWDAYCYN (94 aa). 3 disulfides stabilise this stretch: Cys58-Cys127, Cys82-Cys103, and Cys135-Cys161. Residue Asn118 is glycosylated (N-linked (GlcNAc...) asparagine). The 113-residue stretch at 135 to 247 folds into the CUB domain; it reads CGGVFTDPKQ…GGFQIKYVAM (113 aa). Positions 183, 191, 232, 234, and 235 each coordinate Ca(2+). Cys188 and Cys210 form a disulfide bridge. An N-linked (GlcNAc...) asparagine glycan is attached at Asn258.

In terms of assembly, interacts (via Link domain) with inter-alpha-inhibitor (I-alpha-I) component bikunin. Interacts with ITIH2/HC2; this interaction is required for transesterification of the HC to hyaluronan. Interacts (via Link and CUB domains) with ITIH1. Chondroitin sulfate may be required for the stability of the complex. Interacts (via Link domain) with various C-X-C and C-C chemokines including PF4, CXCL8, CXCL11, CXCL12, CCL2, CCL7, CCL19, CCL21, and CCL27; this interaction interferes with chemokine binding to glycosaminoglycans. Interacts (primarily via Link domain) with BMP2; this interaction is inhibited by hyaluronan. Interacts (via both Link and CUB domains) with TNFSF11. Interacts (via CUB domain) with FN1 (via type III repeats 9-14); this interaction enhances fibronectin fibril assembly. TNFAIP6 may act as a bridging molecule between FN1 and THBS1. N-glycosylated. In terms of tissue distribution, expressed in airway epithelium and submucosal gland (at protein level). Colocalizes with bikunin at the ciliary border. Present in bronchoalveolar lavage fluid (at protein level). Expressed in mesenchymal stem cells. Found in the synovial fluid of patients with rheumatoid arthritis.

It is found in the secreted. In terms of biological role, major regulator of extracellular matrix organization during tissue remodeling. Catalyzes the transfer of a heavy chain (HC) from inter-alpha-inhibitor (I-alpha-I) complex to hyaluronan. Cleaves the ester bond between the C-terminus of the HC and GalNAc residue of the chondroitin sulfate chain in I-alpha-I complex followed by transesterification of the HC to hyaluronan. In the process, potentiates the antiprotease function of I-alpha-I complex through release of free bikunin. Acts as a catalyst in the formation of hyaluronan-HC oligomers and hyaluronan-rich matrix surrounding the cumulus cell-oocyte complex, a necessary step for oocyte fertilization. Assembles hyaluronan in pericellular matrices that serve as platforms for receptor clustering and signaling. Enables binding of hyaluronan deposited on the surface of macrophages to LYVE1 on lymphatic endothelium and facilitates macrophage extravasation. Alters hyaluronan binding to functionally latent CD44 on vascular endothelium, switching CD44 into an active state that supports leukocyte rolling. Modulates the interaction of chemokines with extracellular matrix components and proteoglycans on endothelial cell surface, likely preventing chemokine gradient formation. In a negative feedback mechanism, may limit excessive neutrophil recruitment at inflammatory sites by antagonizing the association of CXCL8 with glycosaminoglycans on vascular endothelium. Has a role in osteogenesis and bone remodeling. Inhibits BMP2-dependent differentiation of mesenchymal stem cell to osteoblasts. Protects against bone erosion during inflammation by inhibiting TNFSF11/RANKL-dependent osteoclast activation. The chain is Tumor necrosis factor-inducible gene 6 protein (TNFAIP6) from Homo sapiens (Human).